The primary structure comprises 66 residues: Large ribosomal subunit protein bL31 (66 aa).

4 residues coordinate Zn(2+): Cys16, Cys18, Cys36, and Cys39.

It belongs to the bacterial ribosomal protein bL31 family. Type A subfamily. In terms of assembly, part of the 50S ribosomal subunit. It depends on Zn(2+) as a cofactor.

Its function is as follows. Binds the 23S rRNA. The polypeptide is Large ribosomal subunit protein bL31 (Sulfurovum sp. (strain NBC37-1)).